The chain runs to 512 residues: Sucrose transport protein SUC2 (512 aa).

Over 1 to 31 (MVSHPMEKAANGASALETQTGELDQPERLRK) the chain is Cytoplasmic. The chain crosses the membrane as a helical span at residues 32–52 (IISVSSIAAGVQFGWALQLSL). Residues 53 to 65 (LTPYVQLLGIPHK) lie on the Extracellular side of the membrane. Residues 66–86 (WASLIWLCGPISGMLVQPIVG) traverse the membrane as a helical segment. At 87–100 (YHSDRCTSRFGRRR) the chain is on the cytoplasmic side. Residues 101–121 (PFIVAGAGLVTVAVFLIGYAA) form a helical membrane-spanning segment. At 122–138 (DIGHSMGDQLDKPPKTR) the chain is on the extracellular side. Residues 139-159 (AIAIFALGFWILDVANNTLQG) traverse the membrane as a helical segment. Over 160–177 (PCRAFLADLSAGNAKKTR) the chain is Cytoplasmic. A helical transmembrane segment spans residues 178 to 198 (TANAFFSFFMAVGNVLGYAAG). Residues 199-223 (SYRNLYKVVPFTMTESCDLYCANLK) are Extracellular-facing. A helical membrane pass occupies residues 224 to 244 (TCFFLSITLLLIVTFVSLCYV). Residues 245 to 278 (KEKPWTPEPTADGKASNVPFFGEIFGAFKELKRP) are Cytoplasmic-facing. Residues 279-299 (MWMLLIVTALNWIAWFPFLLF) form a helical membrane-spanning segment. Residues 300–332 (DTDWMGREVYGGNSDATATAASKKLYNDGVRAG) are Extracellular-facing. A helical transmembrane segment spans residues 333–353 (ALGLMLNAIVLGFMSLGVEWI). Residues 354–362 (GRKLGGAKR) are Cytoplasmic-facing. Residues 363 to 383 (LWGIVNFILAICLAMTVVVTK) traverse the membrane as a helical segment. Topologically, residues 384–407 (QAENHRRDHGGAKTGPPGNVTAGA) are extracellular. Asn402 carries N-linked (GlcNAc...) asparagine glycosylation. Residues 408 to 428 (LTLFAILGIPQAITFSIPFAL) traverse the membrane as a helical segment. Over 429 to 440 (ASIFSTNSGAGQ) the chain is Cytoplasmic. The chain crosses the membrane as a helical span at residues 441-461 (GLSLGVLNLAIVVPQMVISVG). Residues 462 to 473 (GGPFDELFGGGN) are Extracellular-facing. A helical membrane pass occupies residues 474–494 (IPAFVLGAIAAAVSGVLALTV). Residues 495 to 512 (LPSPPPDAPAFKATMGFH) lie on the Cytoplasmic side of the membrane.

This sequence belongs to the glycoside-pentoside-hexuronide (GPH) cation symporter transporter (TC 2.A.2.4) family. In terms of assembly, homodimer. Interacts with SUC3 and SUC4. Expressed in leaves and, to a lower extent, in roots, flowers and stems. Highly specific to the phloem, exclusively localized in companion cells (at protein level).

It localises to the cell membrane. The catalysed reaction is sucrose(out) + H(+)(out) = sucrose(in) + H(+)(in). It functions in the pathway glycan biosynthesis; sucrose metabolism. Inhibited by protonophores (e.g. dinitrophenol and carbonyl cyanide m-chlorophenyl-hydrazone (CCCP)) and SH group inhibitors (e.g. N-ethylmaleimide (NEM) and p-chloromercuriphenyl sulphonic acid (PCMPS)). Its function is as follows. Responsible for the transport of sucrose into the cell, with the concomitant uptake of protons (symport system). Can also transport other glucosides such as maltose, arbutin (hydroquinone-beta-D-glucoside), salicin (2-(hydroxymethyl)phenyl-beta-D-glucoside), alpha-phenylglucoside, beta-phenylglucoside, alpha-paranitrophenylglucoside, beta-paranitrophenylglucoside, and paranitrophenyl-beta-thioglucoside. May also transport biotin. Required for apoplastic phloem sucrose loading in source tissues (e.g. leaves) in order to transport it to sink tissues (e.g. roots, flowers). The chain is Sucrose transport protein SUC2 from Arabidopsis thaliana (Mouse-ear cress).